Consider the following 210-residue polypeptide: Probable glutathione S-transferase gst-36 (210 aa).

In terms of domain architecture, GST N-terminal spans 2–79 (PHFKFYYFDV…YLGHQFHRAG (78 aa)). Glutathione-binding positions include Tyr8, Trp39, Lys43, 49-51 (GQV), and 63-64 (QT). The 130-residue stretch at 81-210 (NAVDCARLDM…YVSQRKATPA (130 aa)) folds into the GST C-terminal domain.

Belongs to the GST superfamily. Sigma family.

It carries out the reaction RX + glutathione = an S-substituted glutathione + a halide anion + H(+). Functionally, conjugation of reduced glutathione to a wide number of exogenous and endogenous hydrophobic electrophiles. The sequence is that of Probable glutathione S-transferase gst-36 (gst-36) from Caenorhabditis elegans.